The following is a 147-amino-acid chain: UPF0306 protein YPK_3704 (147 aa).

Belongs to the UPF0306 family.

In Yersinia pseudotuberculosis serotype O:3 (strain YPIII), this protein is UPF0306 protein YPK_3704.